Reading from the N-terminus, the 238-residue chain is Ribonuclease PH (238 aa).

Phosphate-binding positions include Arg86 and 124-126 (GTR).

The protein belongs to the RNase PH family. As to quaternary structure, homohexameric ring arranged as a trimer of dimers.

It carries out the reaction tRNA(n+1) + phosphate = tRNA(n) + a ribonucleoside 5'-diphosphate. In terms of biological role, phosphorolytic 3'-5' exoribonuclease that plays an important role in tRNA 3'-end maturation. Removes nucleotide residues following the 3'-CCA terminus of tRNAs; can also add nucleotides to the ends of RNA molecules by using nucleoside diphosphates as substrates, but this may not be physiologically important. Probably plays a role in initiation of 16S rRNA degradation (leading to ribosome degradation) during starvation. This is Ribonuclease PH from Pasteurella multocida (strain Pm70).